We begin with the raw amino-acid sequence, 273 residues long: Large ribosomal subunit protein uL2cz/uL2cy (273 aa).

Disordered stretches follow at residues 1 to 23 and 224 to 273; these read MAIH…SQVK and NPVD…RRRK. Positions 262 to 273 are enriched in basic and acidic residues; sequence KYSDRFILRRRK.

This sequence belongs to the universal ribosomal protein uL2 family. In terms of assembly, part of the 50S ribosomal subunit.

Its subcellular location is the plastid. The protein resides in the chloroplast. This is Large ribosomal subunit protein uL2cz/uL2cy (rpl2-A) from Acorus calamus var. americanus (American sweet flag).